The chain runs to 73 residues: Disintegrin mojastin-2 (73 aa).

Residues Glu1 to Gly73 form the Disintegrin domain. 6 cysteine pairs are disulfide-bonded: Cys6–Cys21, Cys8–Cys16, Cys15–Cys38, Cys29–Cys35, Cys34–Cys59, and Cys47–Cys66. The short motif at Arg51–Asp53 is the Cell attachment site element.

It belongs to the venom metalloproteinase (M12B) family. P-II subfamily. P-IIa sub-subfamily. In terms of assembly, monomer (disintegrin). As to expression, expressed by the venom gland.

The protein resides in the secreted. In terms of biological role, inhibits the three processes involved in platelet function (adhesion, activation and aggregation). It inhibits platelet adhesion to fibronectin with an IC(50) of 58.6 nM. It inhibits ATP release from platelet induced by ADP with an IC(50) of 19.5 nM on platelet-rich plasma, probably by binding to ADP receptors (P2RY1 and P2RY12). Finally, it inhibits ADP-induced platelet aggregation with IC(50) of 44.7 nM on platelet-rich plasma and 19.3 nM on whole blood, probably by binding to alpha-IIb/beta-3 (ITGA2B/ITGB3). Inhibits ADP-induced platelet aggregation (IC(50) = 13.8 nM) probably by binding to alpha-IIb/beta-3 (ITGA2B/ITGB3) located on the platelet surface. The polypeptide is Disintegrin mojastin-2 (Crotalus scutulatus scutulatus (Mojave rattlesnake)).